A 194-amino-acid chain; its full sequence is ATP-dependent Clp protease proteolytic subunit 1 (194 aa).

Serine 99 acts as the Nucleophile in catalysis. The active site involves histidine 124.

It belongs to the peptidase S14 family. In terms of assembly, fourteen ClpP subunits assemble into 2 heptameric rings which stack back to back to give a disk-like structure with a central cavity, resembling the structure of eukaryotic proteasomes.

It localises to the cytoplasm. The enzyme catalyses Hydrolysis of proteins to small peptides in the presence of ATP and magnesium. alpha-casein is the usual test substrate. In the absence of ATP, only oligopeptides shorter than five residues are hydrolyzed (such as succinyl-Leu-Tyr-|-NHMec, and Leu-Tyr-Leu-|-Tyr-Trp, in which cleavage of the -Tyr-|-Leu- and -Tyr-|-Trp bonds also occurs).. Its function is as follows. Cleaves peptides in various proteins in a process that requires ATP hydrolysis. Has a chymotrypsin-like activity. Plays a major role in the degradation of misfolded proteins. This Borreliella burgdorferi (strain ATCC 35210 / DSM 4680 / CIP 102532 / B31) (Borrelia burgdorferi) protein is ATP-dependent Clp protease proteolytic subunit 1.